Consider the following 192-residue polypeptide: BREX protein BrxB (192 aa).

It belongs to the BrxB family.

BREX systems (bacteriophage exclusion) provide immunity against bacteriophage. Part of a type 1 BREX system. This system allows phage adsorption but prevents phage DNA replication, without degradation of the phage DNA. Methylation of bacterial DNA by PglX probably guides self/non-self discrimination. When the brxA-brxB-brxC-pglX and pglZ-brxL operons are transformed into a susceptible B.subtilis strain (BEST7003) they confer resistance to bacteriophages SPbeta, SP16, Zeta, phi3T and SP02 and partial protection to phages SP01 and SP82G (these include lytic and temperate phage). They do not protect against phages phi105, rho10 or rho14. Additionally confers a very slight reduction in efficiency of plasmid transformation. This Bacillus cereus (strain H3081.97) protein is BREX protein BrxB.